The primary structure comprises 393 residues: Riboflavin biosynthesis protein RibBA (393 aa).

The segment at 1-200 is DHBP synthase; the sequence is MQFDNIDSAL…IDDLIEYRKK (200 aa). Residues 27–28, aspartate 32, 139–143, and glutamate 163 contribute to the D-ribulose 5-phosphate site; these read RE and RNGHT. Glutamate 28 lines the Mg(2+) pocket. Histidine 142 contacts Mg(2+). A GTP cyclohydrolase II region spans residues 201-393; sequence LEPEIEFKAK…TKKIKMGHLI (193 aa). Residue 249–253 coordinates GTP; that stretch reads RLHSA. Cysteine 254, cysteine 265, and cysteine 267 together coordinate Zn(2+). Residues glutamine 270, 291–293, and threonine 313 each bind GTP; that span reads EGR. The active-site Proton acceptor; for GTP cyclohydrolase activity is aspartate 325. Catalysis depends on arginine 327, which acts as the Nucleophile; for GTP cyclohydrolase activity. GTP-binding residues include serine 348 and lysine 353.

The protein in the N-terminal section; belongs to the DHBP synthase family. In the C-terminal section; belongs to the GTP cyclohydrolase II family. Requires Mg(2+) as cofactor. It depends on Mn(2+) as a cofactor. The cofactor is Zn(2+).

The catalysed reaction is D-ribulose 5-phosphate = (2S)-2-hydroxy-3-oxobutyl phosphate + formate + H(+). It carries out the reaction GTP + 4 H2O = 2,5-diamino-6-hydroxy-4-(5-phosphoribosylamino)-pyrimidine + formate + 2 phosphate + 3 H(+). It participates in cofactor biosynthesis; riboflavin biosynthesis; 2-hydroxy-3-oxobutyl phosphate from D-ribulose 5-phosphate: step 1/1. It functions in the pathway cofactor biosynthesis; riboflavin biosynthesis; 5-amino-6-(D-ribitylamino)uracil from GTP: step 1/4. Functionally, catalyzes the conversion of D-ribulose 5-phosphate to formate and 3,4-dihydroxy-2-butanone 4-phosphate. Catalyzes the conversion of GTP to 2,5-diamino-6-ribosylamino-4(3H)-pyrimidinone 5'-phosphate (DARP), formate and pyrophosphate. The chain is Riboflavin biosynthesis protein RibBA from Staphylococcus aureus (strain MRSA252).